The sequence spans 258 residues: Ureidoacrylate amidohydrolase RutB (258 aa).

Residues 1-23 (MDRPTTYPMDQPAGFRDAQGRHG) are disordered. Aspartate 47 functions as the Proton acceptor in the catalytic mechanism. The active site involves lysine 156. Residue cysteine 189 is the Nucleophile of the active site.

The protein belongs to the isochorismatase family. RutB subfamily.

It carries out the reaction (Z)-3-ureidoacrylate + H2O + H(+) = (Z)-3-aminoacrylate + NH4(+) + CO2. The catalysed reaction is (Z)-3-ureidoacrylate + H2O = (Z)-3-aminoacrylate + carbamate + H(+). The enzyme catalyses (Z)-2-methylureidoacrylate + H2O + H(+) = (Z)-2-methylaminoacrylate + NH4(+) + CO2. Functionally, hydrolyzes ureidoacrylate to form aminoacrylate and carbamate. The carbamate hydrolyzes spontaneously, thereby releasing one of the nitrogen atoms of the pyrimidine ring as ammonia and one of its carbon atoms as CO2. The sequence is that of Ureidoacrylate amidohydrolase RutB from Methylobacterium radiotolerans (strain ATCC 27329 / DSM 1819 / JCM 2831 / NBRC 15690 / NCIMB 10815 / 0-1).